The following is a 471-amino-acid chain: Serine hydroxymethyltransferase, cytosolic (471 aa).

Lysine 249 carries the post-translational modification N6-(pyridoxal phosphate)lysine.

The protein belongs to the SHMT family. Pyridoxal 5'-phosphate is required as a cofactor.

The protein resides in the cytoplasm. Its subcellular location is the cytosol. It catalyses the reaction (6R)-5,10-methylene-5,6,7,8-tetrahydrofolate + glycine + H2O = (6S)-5,6,7,8-tetrahydrofolate + L-serine. Its pathway is one-carbon metabolism; tetrahydrofolate interconversion. Functionally, catalyzes the interconversion of serine and glycine. Essential for viability and required for virulence in a murine model of established pulmonary infection. The chain is Serine hydroxymethyltransferase, cytosolic from Aspergillus fumigatus (strain ATCC MYA-4609 / CBS 101355 / FGSC A1100 / Af293) (Neosartorya fumigata).